We begin with the raw amino-acid sequence, 39 residues long: Cytochrome b559 subunit beta (39 aa).

A helical membrane pass occupies residues 14–30; sequence WLAVHGLAVPTVFFLGS. Position 18 (His-18) interacts with heme.

It belongs to the PsbE/PsbF family. Heterodimer of an alpha subunit and a beta subunit. PSII is composed of 1 copy each of membrane proteins PsbA, PsbB, PsbC, PsbD, PsbE, PsbF, PsbH, PsbI, PsbJ, PsbK, PsbL, PsbM, PsbT, PsbX, PsbY, PsbZ, Psb30/Ycf12, at least 3 peripheral proteins of the oxygen-evolving complex and a large number of cofactors. It forms dimeric complexes. Heme b is required as a cofactor.

Its subcellular location is the plastid. The protein localises to the chloroplast thylakoid membrane. In terms of biological role, this b-type cytochrome is tightly associated with the reaction center of photosystem II (PSII). PSII is a light-driven water:plastoquinone oxidoreductase that uses light energy to abstract electrons from H(2)O, generating O(2) and a proton gradient subsequently used for ATP formation. It consists of a core antenna complex that captures photons, and an electron transfer chain that converts photonic excitation into a charge separation. In Gnetum gnemon (Spanish joint-fir), this protein is Cytochrome b559 subunit beta.